The primary structure comprises 659 residues: Nitrate import ATP-binding protein NrtC (659 aa).

The ABC transporter domain occupies 5–239 (LAVDHVHQVF…RPRQRLEMME (235 aa)). Residue 42–49 (GHSGCGKS) coordinates ATP. Residues 255–278 (QQQRRAKRRAKAAAPAPAVAASQQ) form a linker region. Residues 279 to 659 (KTVRLGFLPG…VAPIPLATSA (381 aa)) are nrtA-like.

The protein belongs to the ABC transporter superfamily. Nitrate/nitrite/cyanate uptake transporter (NitT) (TC 3.A.1.16) family. In terms of assembly, the complex is composed of two ATP-binding proteins (NrtC and NrtD), two transmembrane proteins (NrtB) and a solute-binding protein (NrtA).

The protein resides in the cell inner membrane. It catalyses the reaction nitrate(out) + ATP + H2O = nitrate(in) + ADP + phosphate + H(+). Transport is inhibited by ammonium. The C-terminal domain of NrtC is involved in the ammonium-promoted inhibition of the nitrate/nitrite transporter. Its function is as follows. Part of the ABC transporter complex NrtABCD involved in nitrate uptake. The complex is probably also involved in nitrite transport. Probably responsible for energy coupling to the transport system. This Synechococcus elongatus (strain ATCC 33912 / PCC 7942 / FACHB-805) (Anacystis nidulans R2) protein is Nitrate import ATP-binding protein NrtC.